We begin with the raw amino-acid sequence, 119 residues long: Putative arsenical resistance operon repressor ArsR2 (119 aa).

Residues 24-119 enclose the HTH arsR-type domain; the sequence is VDSDAMATDL…TLDDLRGNHE (96 aa). The segment at residues 60-83 is a DNA-binding region (H-T-H motif); it reads VCDLEATVGVSQSAVSQALSRLYT.

Its function is as follows. Transcriptional repressor for the arsR2M operon. The chain is Putative arsenical resistance operon repressor ArsR2 (arsR2) from Halobacterium salinarum (strain ATCC 700922 / JCM 11081 / NRC-1) (Halobacterium halobium).